The chain runs to 201 residues: ATP-dependent Clp protease proteolytic subunit (201 aa).

The Nucleophile role is filled by Ser-105. The active site involves His-130.

Belongs to the peptidase S14 family. As to quaternary structure, fourteen ClpP subunits assemble into 2 heptameric rings which stack back to back to give a disk-like structure with a central cavity, resembling the structure of eukaryotic proteasomes.

It is found in the cytoplasm. It catalyses the reaction Hydrolysis of proteins to small peptides in the presence of ATP and magnesium. alpha-casein is the usual test substrate. In the absence of ATP, only oligopeptides shorter than five residues are hydrolyzed (such as succinyl-Leu-Tyr-|-NHMec, and Leu-Tyr-Leu-|-Tyr-Trp, in which cleavage of the -Tyr-|-Leu- and -Tyr-|-Trp bonds also occurs).. Functionally, cleaves peptides in various proteins in a process that requires ATP hydrolysis. Has a chymotrypsin-like activity. Plays a major role in the degradation of misfolded proteins. This chain is ATP-dependent Clp protease proteolytic subunit, found in Aquifex aeolicus (strain VF5).